Here is a 91-residue protein sequence, read N- to C-terminus: Small ribosomal subunit protein uS19 (91 aa).

This sequence belongs to the universal ribosomal protein uS19 family.

Its function is as follows. Protein S19 forms a complex with S13 that binds strongly to the 16S ribosomal RNA. The chain is Small ribosomal subunit protein uS19 from Synechococcus sp. (strain CC9902).